Consider the following 677-residue polypeptide: Transketolase 1 (677 aa).

H27 contributes to the substrate binding site. Thiamine diphosphate is bound by residues H66 and 114 to 116 (GPL). A Mg(2+)-binding site is contributed by D155. Positions 156 and 185 each coordinate thiamine diphosphate. Positions 185 and 187 each coordinate Mg(2+). H261, R356, and S383 together coordinate substrate. H261 contributes to the thiamine diphosphate binding site. Residues E415 and F442 each coordinate thiamine diphosphate. E415 (proton donor) is an active-site residue. H466, D474, and R525 together coordinate substrate.

It belongs to the transketolase family. In terms of assembly, homodimer. Requires Mg(2+) as cofactor. It depends on Ca(2+) as a cofactor. Mn(2+) is required as a cofactor. Co(2+) serves as cofactor. The cofactor is thiamine diphosphate.

The catalysed reaction is D-sedoheptulose 7-phosphate + D-glyceraldehyde 3-phosphate = aldehydo-D-ribose 5-phosphate + D-xylulose 5-phosphate. Its function is as follows. Catalyzes the transfer of a two-carbon ketol group from a ketose donor to an aldose acceptor, via a covalent intermediate with the cofactor thiamine pyrophosphate. In Candida albicans (Yeast), this protein is Transketolase 1 (TKT1).